Consider the following 668-residue polypeptide: MKSYEIALIGNPNVGKSTIFNALTGENVYIGNWPGVTVEKKEGEFEYNGEKFKVVDLPGVYSLTANSIDEIIARDYIINEKPDLVVNIVDATALERNLYLTLQLMEMGANLLLALNKMDLAKSLGIEIDVDKLEKILGVKVVPLSAAKKMGIEDLKKAISIAVKDKKTAEIKYPNFEPYIKKITSILQKDEDLKKYNLRYLAIKLLENDKYVEEIVKNSKVWNELKPVLDSIINELSKKYGEAELGIVEERYKVIDKIVKEVMKKTSGKLTTTEMLDDVLTDEKIGTLLIIPFLWMLFKFTFDVSKPFSAMIEYFFGFLSEVVKSSISNKFIASLLADGIISGVGAVLVFFPILAFLFFAISFLEDSGYMARIPFITDRIMNKFGLPGKAVISMVMGFGCNVPAIMATRTIEDEKDRILTILINPLLSCSARLPIYALFAGALFSKYQGVVILSMYALGVVLALITAFLFRKLIFKTSPSYLIVELPPYHIPHLNVVLKNTWERVYDFLRKAGTIIVFGVILVWVLSVYGPSGYLGEEVFENPQLIANSWVAVIGKTLAPLFSPMGWDWRACSALVFGIIAKEVVVGSLAMLYGTGEENLSSVIAHAFSPVSAYAFMAFSLIYLPCIATLAVIKQEIGWKWALFAVTYEMILAYVVALVISVIGNLLF.

In terms of domain architecture, FeoB-type G spans Ser3 to Asp165. Gly10–Ser17 contacts GTP. Mg(2+) contacts are provided by Asn21, Ala22, Thr24, and Gly25. Residues Gly35–Glu39, Asp56–Gly59, Asn116–Asp119, and Ser145–Ala147 contribute to the GTP site. 8 helical membrane passes run Val344–Leu364, Leu386–Met406, Ile418–Leu438, Val450–Phe470, Ile515–Leu535, Ala574–Gly594, Ala613–Ile633, and Leu643–Ile663.

This sequence belongs to the TRAFAC class TrmE-Era-EngA-EngB-Septin-like GTPase superfamily. FeoB GTPase (TC 9.A.8) family. In terms of assembly, the crystallized N-terminal domain is a homodimer.

It is found in the cell membrane. Probable transporter of a GTP-driven Fe(2+) uptake system, might be able to transport Fe(2+) into or out of the cell. This Methanocaldococcus jannaschii (strain ATCC 43067 / DSM 2661 / JAL-1 / JCM 10045 / NBRC 100440) (Methanococcus jannaschii) protein is Fe(2+) transporter FeoB.